The following is a 201-amino-acid chain: FMN-dependent NADH:quinone oxidoreductase (201 aa).

FMN-binding positions include Ser10, Ser16–Ser18, Met96–Phe99, and Ser140–Gly143.

Belongs to the azoreductase type 1 family. Homodimer. It depends on FMN as a cofactor.

The enzyme catalyses 2 a quinone + NADH + H(+) = 2 a 1,4-benzosemiquinone + NAD(+). The catalysed reaction is N,N-dimethyl-1,4-phenylenediamine + anthranilate + 2 NAD(+) = 2-(4-dimethylaminophenyl)diazenylbenzoate + 2 NADH + 2 H(+). Functionally, quinone reductase that provides resistance to thiol-specific stress caused by electrophilic quinones. Its function is as follows. Also exhibits azoreductase activity. Catalyzes the reductive cleavage of the azo bond in aromatic azo compounds to the corresponding amines. The protein is FMN-dependent NADH:quinone oxidoreductase of Escherichia coli O6:H1 (strain CFT073 / ATCC 700928 / UPEC).